We begin with the raw amino-acid sequence, 562 residues long: Arginine--tRNA ligase 2 (562 aa).

The 'HIGH' region motif lies at 122–132 (PNIAKPFSMGH).

It belongs to the class-I aminoacyl-tRNA synthetase family. Monomer.

The protein resides in the cytoplasm. The catalysed reaction is tRNA(Arg) + L-arginine + ATP = L-arginyl-tRNA(Arg) + AMP + diphosphate. The chain is Arginine--tRNA ligase 2 (argS2) from Bacillus anthracis.